We begin with the raw amino-acid sequence, 445 residues long: GTPase Der (445 aa).

2 EngA-type G domains span residues 3 to 167 and 180 to 353; these read PVIA…YAGQ and IKIA…AAAM. Residues 9-16, 56-60, 119-122, 186-193, 233-237, and 298-301 each bind GTP; these read GRPNVGKS, DTGGF, NKAE, DTAGL, and NKWD. Residues 354 to 438 form the KH-like domain; it reads AKLPTPKLTR…PLRIEFRSSN (85 aa).

Belongs to the TRAFAC class TrmE-Era-EngA-EngB-Septin-like GTPase superfamily. EngA (Der) GTPase family. Associates with the 50S ribosomal subunit.

Its function is as follows. GTPase that plays an essential role in the late steps of ribosome biogenesis. The protein is GTPase Der of Burkholderia lata (strain ATCC 17760 / DSM 23089 / LMG 22485 / NCIMB 9086 / R18194 / 383).